The sequence spans 458 residues: tRNA modification GTPase MnmE (458 aa).

(6S)-5-formyl-5,6,7,8-tetrahydrofolate-binding residues include arginine 22, glutamate 84, and arginine 123. The region spanning 220-379 (GISTAIIGRP…LEKAIADLFF (160 aa)) is the TrmE-type G domain. Asparagine 230 serves as a coordination point for K(+). Residues 230-235 (NVGKSS), 249-255 (TDIAGTT), and 274-277 (DTAG) contribute to the GTP site. Position 234 (serine 234) interacts with Mg(2+). K(+) contacts are provided by threonine 249, isoleucine 251, and threonine 254. Mg(2+) is bound at residue threonine 255. Lysine 458 contributes to the (6S)-5-formyl-5,6,7,8-tetrahydrofolate binding site.

This sequence belongs to the TRAFAC class TrmE-Era-EngA-EngB-Septin-like GTPase superfamily. TrmE GTPase family. In terms of assembly, homodimer. Heterotetramer of two MnmE and two MnmG subunits. K(+) serves as cofactor.

It localises to the cytoplasm. Its function is as follows. Exhibits a very high intrinsic GTPase hydrolysis rate. Involved in the addition of a carboxymethylaminomethyl (cmnm) group at the wobble position (U34) of certain tRNAs, forming tRNA-cmnm(5)s(2)U34. The sequence is that of tRNA modification GTPase MnmE from Bacillus mycoides (strain KBAB4) (Bacillus weihenstephanensis).